The following is an 853-amino-acid chain: Aminotransferase PigE (853 aa).

Pyridoxal 5'-phosphate is bound at residue 503 to 504; that stretch reads GT. The residue at position 645 (K645) is an N6-(pyridoxal phosphate)lysine. A pyridoxal 5'-phosphate-binding site is contributed by T680.

It belongs to the class-III pyridoxal-phosphate-dependent aminotransferase family. As to quaternary structure, homodimer. Requires pyridoxal 5'-phosphate as cofactor.

It participates in antibiotic biosynthesis; prodigiosin biosynthesis. In terms of biological role, involved in the biosynthesis of 2-methyl-3-n-amyl-pyrrole (MAP), one of the terminal products involved in the biosynthesis of the red antibiotic prodigiosin (Pig). Catalyzes the transamination to the aldehyde group of 3-acetyloctanal, resulting in an aminoketone, which spontaneously cyclizes to yield the dihydro form of MAP (H2MAP). This Serratia sp. (strain ATCC 39006) (Prodigiosinella confusarubida) protein is Aminotransferase PigE.